We begin with the raw amino-acid sequence, 127 residues long: Small ribosomal subunit protein uS11 (127 aa).

This sequence belongs to the universal ribosomal protein uS11 family. Part of the 30S ribosomal subunit. Interacts with proteins S7 and S18. Binds to IF-3.

Its function is as follows. Located on the platform of the 30S subunit, it bridges several disparate RNA helices of the 16S rRNA. Forms part of the Shine-Dalgarno cleft in the 70S ribosome. In Chlorobaculum tepidum (strain ATCC 49652 / DSM 12025 / NBRC 103806 / TLS) (Chlorobium tepidum), this protein is Small ribosomal subunit protein uS11.